The primary structure comprises 321 residues: Protein ATP1B4 (321 aa).

Positions 1–41 (MEPGMEMNTASEGGTRRGPENKHEEKVQDPNRGEAETKAEM) are disordered. Residues 1–72 (MEPGMEMNTA…RTCMGRTAKS (72 aa)) are Cytoplasmic-facing. The span at 14–41 (GTRRGPENKHEEKVQDPNRGEAETKAEM) shows a compositional bias: basic and acidic residues. Residues 73 to 93 (WGLILLFYFIFYTCLAGMFAF) form a helical membrane-spanning segment. Residues 94-321 (CMYVMLLTLS…RIIFTLSIGK (228 aa)) lie on the Extracellular side of the membrane. Residues Asn132, Asn176, and Asn193 are each glycosylated (N-linked (GlcNAc...) asparagine). A disulfide bond links Cys165 and Cys184. Intrachain disulfides connect Cys194–Cys210 and Cys233–Cys293. Residues Asn239, Asn252, and Asn270 are each glycosylated (N-linked (GlcNAc...) asparagine).

It belongs to the X(+)/potassium ATPases subunit beta family. As to quaternary structure, composed of two subunits: alpha (catalytic) and beta (accessory). In terms of processing, glycosylated. As to expression, expressed in skeletal muscle, intestine, heart, brain, retina, inner ear and skin.

The protein resides in the membrane. In terms of biological role, this is the non-catalytic component of the active enzyme, which catalyzes the hydrolysis of ATP coupled with the exchange of Na(+) and K(+) ions across the plasma membrane. The chain is Protein ATP1B4 (ATP1B4) from Gallus gallus (Chicken).